A 190-amino-acid polypeptide reads, in one-letter code: Shikimate kinase (190 aa).

ATP is bound at residue 26–31 (GSGKST). Serine 30 is a Mg(2+) binding site. Substrate-binding residues include aspartate 48, arginine 72, and glycine 94. Arginine 133 provides a ligand contact to ATP. Substrate is bound at residue arginine 152.

It belongs to the shikimate kinase family. As to quaternary structure, monomer. Mg(2+) serves as cofactor.

It is found in the cytoplasm. It catalyses the reaction shikimate + ATP = 3-phosphoshikimate + ADP + H(+). Its pathway is metabolic intermediate biosynthesis; chorismate biosynthesis; chorismate from D-erythrose 4-phosphate and phosphoenolpyruvate: step 5/7. Catalyzes the specific phosphorylation of the 3-hydroxyl group of shikimic acid using ATP as a cosubstrate. The polypeptide is Shikimate kinase (Prochlorococcus marinus (strain SARG / CCMP1375 / SS120)).